The sequence spans 714 residues: MFNTHKVEIEWGGRPLTLETGKIARQADGAVLATYGETAVLATVVSAKEPKPGQDFFPLTVNYQEKTYAAGKIPGGYFKREGRPSENETLVSRLIDRPIRPLFVDGYKNDTQVVITVLQHDLENNPDILSMVAASAALTISGVPFMGPISGARVGYIDGEYVLNPNIDEMPESKLDLVVAGTSEAVLMVESEAQELPEDVMLGAVMFGHKSFQPVIDAIIKLAEVAAKEPRDFQPEDLSELEAKVLAVVENDLREAYKITEKQARYAAVDAAKAKAKEHFFPEGVEETEMSAEQFATIFKHLQAKIVRWNILDTGNRIDGRDLSTVRPIVSEVGILPRTHGSALFTRGETQAIVVATLGTGEDEQMIDALTGTYKESFMLHYNFPPYSVGETGRMGSPGRREIGHGKLAWRAIHPMLPAAEQFPYTIRAVSEITESNGSSSMATVCGTSLALMDAGVPIVRPVAGIAMGLIKEGERFAVLSDILGDEDYLGDMDFKVAGTEFGITSLQMDIKIDGITEEIMKVALEQAKGGRVHILGEMAKAISSSRAELGEFAPRIEVMNIPTDKIRDVIGSGGKVIREIVEKTGAKINIEDDGTVKIASSNGKEIEAAKKWIHSIVAEPEVGEIYEGTVVKTADFGAFVNFFGPRDGLVHISQLAADRVAKTTDVVKEGQKVWVKLMGFDERGKVRLSMKVVDQETGKEIVAEKKKEEVDAE.

The Mg(2+) site is built by aspartate 488 and aspartate 494. The KH domain maps to 555 to 614; the sequence is PRIEVMNIPTDKIRDVIGSGGKVIREIVEKTGAKINIEDDGTVKIASSNGKEIEAAKKWI. An S1 motif domain is found at 624–692; that stretch reads GEIYEGTVVK…ERGKVRLSMK (69 aa).

It belongs to the polyribonucleotide nucleotidyltransferase family. It depends on Mg(2+) as a cofactor.

It is found in the cytoplasm. The enzyme catalyses RNA(n+1) + phosphate = RNA(n) + a ribonucleoside 5'-diphosphate. Involved in mRNA degradation. Catalyzes the phosphorolysis of single-stranded polyribonucleotides processively in the 3'- to 5'-direction. In Brucella suis biovar 1 (strain 1330), this protein is Polyribonucleotide nucleotidyltransferase.